An 80-amino-acid chain; its full sequence is MSGLGIMVLTLLLLVSMATSHQDGGGKQATQRDAINVRRRRSITRRVVTEACEEYCEDRDKKTCCGLENGEPFCATLCFG.

A signal peptide spans 1-20; the sequence is MSGLGIMVLTLLLLVSMATS. Residues 21–44 constitute a propeptide that is removed on maturation; the sequence is HQDGGGKQATQRDAINVRRRRSIT. 3 cysteine pairs are disulfide-bonded: Cys52/Cys65, Cys56/Cys74, and Cys64/Cys78. Phenylalanine amide is present on Phe79.

It belongs to the conotoxin O3 superfamily. As to expression, expressed by the venom duct.

The protein localises to the secreted. This chain is Conotoxin VnMSGL-0121, found in Conus ventricosus (Mediterranean cone).